Reading from the N-terminus, the 249-residue chain is MSDQKKLRLGVNIDHVATVRNARGGAYPDPLRAARIAEEAGADGITAHLREDRRHISDADIEGLMDVLSVPLNFEMAATDEMQQIALRHKPHAVCIVPEKREERTTEGGLEVAREENVLAHFIAPLREAGCRVSIFIAAEQRQIEAAHRIGAEVIELHTGAYCDAHAEGDFAQRDAELARLRDMATFAHGLGLEVHAGHGLTYDTVQPIAAFPEVIELNIGHFLIGESIFRGLEPAIAEMRRLMDAARA.

Position 12 (Asn12) interacts with 3-amino-2-oxopropyl phosphate. 14-15 (DH) contacts 1-deoxy-D-xylulose 5-phosphate. Position 23 (Arg23) interacts with 3-amino-2-oxopropyl phosphate. The active-site Proton acceptor is His48. 1-deoxy-D-xylulose 5-phosphate-binding residues include Arg50 and His55. Catalysis depends on Glu75, which acts as the Proton acceptor. Residue Thr105 participates in 1-deoxy-D-xylulose 5-phosphate binding. Catalysis depends on His199, which acts as the Proton donor. 3-amino-2-oxopropyl phosphate is bound by residues Gly200 and 221 to 222 (GH).

Belongs to the PNP synthase family. Homooctamer; tetramer of dimers.

The protein localises to the cytoplasm. The enzyme catalyses 3-amino-2-oxopropyl phosphate + 1-deoxy-D-xylulose 5-phosphate = pyridoxine 5'-phosphate + phosphate + 2 H2O + H(+). Its pathway is cofactor biosynthesis; pyridoxine 5'-phosphate biosynthesis; pyridoxine 5'-phosphate from D-erythrose 4-phosphate: step 5/5. Its function is as follows. Catalyzes the complicated ring closure reaction between the two acyclic compounds 1-deoxy-D-xylulose-5-phosphate (DXP) and 3-amino-2-oxopropyl phosphate (1-amino-acetone-3-phosphate or AAP) to form pyridoxine 5'-phosphate (PNP) and inorganic phosphate. The sequence is that of Pyridoxine 5'-phosphate synthase from Roseobacter denitrificans (strain ATCC 33942 / OCh 114) (Erythrobacter sp. (strain OCh 114)).